A 117-amino-acid chain; its full sequence is PBP1-interacting protein XAC1 (117 aa).

The segment at 1 to 60 (MSKAPSQPAKKWMSARTLAKSEDATNRKSNTAAPASQPSQQPASVMHERPTPPPPAPVQL) is disordered. Residues 32-44 (AAPASQPSQQPAS) are compositionally biased toward low complexity.

In terms of assembly, forms a complex composed of at least MKT1, PBP1, XAC1 and LSM12. Forms a complex composed of at least MKT1L, PBP1, XAC1 and LSM12.

The protein resides in the cytoplasm. Involved in post-transcriptional regulation of gene expression. This Trypanosoma brucei brucei (strain 927/4 GUTat10.1) protein is PBP1-interacting protein XAC1.